We begin with the raw amino-acid sequence, 70 residues long: Small ribosomal subunit protein bS21 (70 aa).

It belongs to the bacterial ribosomal protein bS21 family.

The polypeptide is Small ribosomal subunit protein bS21 (Bordetella avium (strain 197N)).